A 379-amino-acid polypeptide reads, in one-letter code: Transcription factor bHLH122 (379 aa).

A compositionally biased stretch (basic and acidic residues) spans 1–17; that stretch reads MESEFQQHHFLLHDHQH. A disordered region spans residues 1–21; sequence MESEFQQHHFLLHDHQHQRPR. Position 74 is a phosphoserine (serine 74). Disordered regions lie at residues 79–98, 133–156, and 190–286; these read TFNS…EDED, SVSR…ARHN, and TSNT…MSLP. Positions 84–93 are enriched in basic and acidic residues; that stretch reads GTEKKPPEVK. The segment covering 190–200 has biased composition (polar residues); sequence TSNTEASSLTP. 2 positions are modified to phosphoserine: serine 213 and serine 234. The segment covering 235-261 has biased composition (polar residues); it reads GGFNRSFGNEGSASSKLTALARTQSGG. Residues 265 to 274 show a composition bias toward basic and acidic residues; the sequence is YKTKDEDSAS. The region spanning 310-360 is the bHLH domain; sequence CATHPRSIAERVRRTKISERMRKLQDLVPNMDTQTNTADMLDLAVQYIKDL.

Homodimer.

The protein localises to the nucleus. In Arabidopsis thaliana (Mouse-ear cress), this protein is Transcription factor bHLH122 (BHLH122).